Reading from the N-terminus, the 444-residue chain is 23S rRNA (uracil(1939)-C(5))-methyltransferase RlmD (444 aa).

The region spanning Arg5 to Glu67 is the TRAM domain. Cys80, Cys86, Cys89, and Cys168 together coordinate [4Fe-4S] cluster. Residues Gln276, Phe305, Asn310, Glu326, Asp353, and Asp374 each contribute to the S-adenosyl-L-methionine site. Cys400 functions as the Nucleophile in the catalytic mechanism.

This sequence belongs to the class I-like SAM-binding methyltransferase superfamily. RNA M5U methyltransferase family. RlmD subfamily.

It catalyses the reaction uridine(1939) in 23S rRNA + S-adenosyl-L-methionine = 5-methyluridine(1939) in 23S rRNA + S-adenosyl-L-homocysteine + H(+). Its function is as follows. Catalyzes the formation of 5-methyl-uridine at position 1939 (m5U1939) in 23S rRNA. This is 23S rRNA (uracil(1939)-C(5))-methyltransferase RlmD from Xanthomonas campestris pv. campestris (strain 8004).